We begin with the raw amino-acid sequence, 277 residues long: 2-dehydro-3-deoxyphosphooctonate aldolase (277 aa).

Belongs to the KdsA family.

The protein resides in the cytoplasm. The catalysed reaction is D-arabinose 5-phosphate + phosphoenolpyruvate + H2O = 3-deoxy-alpha-D-manno-2-octulosonate-8-phosphate + phosphate. The protein operates within carbohydrate biosynthesis; 3-deoxy-D-manno-octulosonate biosynthesis; 3-deoxy-D-manno-octulosonate from D-ribulose 5-phosphate: step 2/3. It functions in the pathway bacterial outer membrane biogenesis; lipopolysaccharide biosynthesis. In Syntrophotalea carbinolica (strain DSM 2380 / NBRC 103641 / GraBd1) (Pelobacter carbinolicus), this protein is 2-dehydro-3-deoxyphosphooctonate aldolase.